A 150-amino-acid polypeptide reads, in one-letter code: SsrA-binding protein (150 aa).

This sequence belongs to the SmpB family.

The protein resides in the cytoplasm. Its function is as follows. Required for rescue of stalled ribosomes mediated by trans-translation. Binds to transfer-messenger RNA (tmRNA), required for stable association of tmRNA with ribosomes. tmRNA and SmpB together mimic tRNA shape, replacing the anticodon stem-loop with SmpB. tmRNA is encoded by the ssrA gene; the 2 termini fold to resemble tRNA(Ala) and it encodes a 'tag peptide', a short internal open reading frame. During trans-translation Ala-aminoacylated tmRNA acts like a tRNA, entering the A-site of stalled ribosomes, displacing the stalled mRNA. The ribosome then switches to translate the ORF on the tmRNA; the nascent peptide is terminated with the 'tag peptide' encoded by the tmRNA and targeted for degradation. The ribosome is freed to recommence translation, which seems to be the essential function of trans-translation. The polypeptide is SsrA-binding protein (Nitratiruptor sp. (strain SB155-2)).